The sequence spans 441 residues: Serine hydroxymethyltransferase (441 aa).

(6S)-5,6,7,8-tetrahydrofolate is bound by residues L119 and 123–125; that span reads GHL. Position 228 is an N6-(pyridoxal phosphate)lysine (K228). 370–372 is a binding site for (6S)-5,6,7,8-tetrahydrofolate; that stretch reads SPF.

Belongs to the SHMT family. In terms of assembly, homodimer. It depends on pyridoxal 5'-phosphate as a cofactor.

The protein localises to the cytoplasm. The catalysed reaction is (6R)-5,10-methylene-5,6,7,8-tetrahydrofolate + glycine + H2O = (6S)-5,6,7,8-tetrahydrofolate + L-serine. Its pathway is one-carbon metabolism; tetrahydrofolate interconversion. It participates in amino-acid biosynthesis; glycine biosynthesis; glycine from L-serine: step 1/1. Catalyzes the reversible interconversion of serine and glycine with tetrahydrofolate (THF) serving as the one-carbon carrier. This reaction serves as the major source of one-carbon groups required for the biosynthesis of purines, thymidylate, methionine, and other important biomolecules. Also exhibits THF-independent aldolase activity toward beta-hydroxyamino acids, producing glycine and aldehydes, via a retro-aldol mechanism. This is Serine hydroxymethyltransferase from Chlorobium phaeovibrioides (strain DSM 265 / 1930) (Prosthecochloris vibrioformis (strain DSM 265)).